The sequence spans 616 residues: UDP-sugar pyrophosphorylase (616 aa).

It belongs to the USP family. Requires Mg(2+) as cofactor. It depends on Mn(2+) as a cofactor.

It catalyses the reaction a monosaccharide 1-phosphate + UTP + H(+) = a UDP-monosaccharide + diphosphate. In terms of biological role, may function as the terminal enzyme of the myo-inositol oxidation (MIO) pathway. May also play a role in the salvage pathway for synthesis of nucleotide sugars. The chain is UDP-sugar pyrophosphorylase (USP) from Oryza sativa subsp. japonica (Rice).